We begin with the raw amino-acid sequence, 204 residues long: Golgi to ER traffic protein 1 (204 aa).

The Lumenal segment spans residues 1-11; sequence MLTLDIDPYTI. A helical membrane pass occupies residues 12 to 31; it reads LVTSFLILAIQKLVTVIGKQ. The Cytoplasmic portion of the chain corresponds to 32–116; that stretch reads KIQLYIWQIY…RIDSITKLAI (85 aa). Residues 78 to 113 adopt a coiled-coil conformation; that stretch reads AKWTKINRALDKLKLEVQELNETIAGEKTRIDSITK. A helical transmembrane segment spans residues 117 to 137; the sequence is TLILTLPIWFLRIFCRKTALL. The Lumenal portion of the chain corresponds to 138 to 161; that stretch reads YIRKGILPAYLEWWLALPFFKSGT. A helical transmembrane segment spans residues 162 to 178; sequence IGLTCWMFVVNSVLSNL. Residues 179–204 are Cytoplasmic-facing; it reads IFLISFPFTQKVERPIKPKNEQKTES.

The protein belongs to the WRB/GET1 family. As to quaternary structure, component of the Golgi to ER traffic (GET) complex, which is composed of GET1, GET2 and GET3. Within the complex, GET1 and GET2 form a heterotetramer which is stabilized by phosphatidylinositol binding and which binds to the GET3 homodimer.

It is found in the endoplasmic reticulum membrane. The protein localises to the golgi apparatus membrane. Functionally, required for the post-translational delivery of tail-anchored (TA) proteins to the endoplasmic reticulum. Together with GET2, acts as a membrane receptor for soluble GET3, which recognizes and selectively binds the transmembrane domain of TA proteins in the cytosol. The GET complex cooperates with the HDEL receptor ERD2 to mediate the ATP-dependent retrieval of resident ER proteins that contain a C-terminal H-D-E-L retention signal from the Golgi to the ER. The polypeptide is Golgi to ER traffic protein 1 (Lodderomyces elongisporus (strain ATCC 11503 / CBS 2605 / JCM 1781 / NBRC 1676 / NRRL YB-4239) (Yeast)).